A 463-amino-acid chain; its full sequence is RuvB-like 2 (463 aa).

Ala2 is modified (N-acetylalanine). A Glycyl lysine isopeptide (Lys-Gly) (interchain with G-Cter in SUMO2) cross-link involves residue Lys9. 77–84 (GQPGTGKT) contributes to the ATP binding site. Phosphoserine is present on Ser437. Glycyl lysine isopeptide (Lys-Gly) (interchain with G-Cter in SUMO2) cross-links involve residues Lys444 and Lys456.

This sequence belongs to the RuvB family. As to quaternary structure, forms homohexameric rings. Can form a dodecamer with RUVBL1 made of two stacked hexameric rings; however, even though RUVBL1 and RUVBL2 are present in equimolar ratio, the oligomeric status of each hexamer is not known. Oligomerization may regulate binding to nucleic acids and conversely, binding to nucleic acids may affect the dodecameric assembly. Interaction of the complex with DHX34 results in conformational changes of the N-terminus of the RUVBL2 subunits, resulting in loss of nucleotide binding ability and ATP hydrolysis of the complex. Interacts with the transcriptional activation domain of MYC. Interacts with ATF2. Component of the RNA polymerase II holoenzyme complex. May also act to bridge the LEF1/TCF1-CTNNB1 complex and TBP. Component of the NuA4 histone acetyltransferase complex which contains the catalytic subunit KAT5/TIP60 and the subunits EP400, TRRAP/PAF400, BRD8/SMAP, EPC1, DMAP1/DNMAP1, RUVBL1/TIP49, RUVBL2, ING3, actin, ACTL6A/BAF53A, MORF4L1/MRG15, MORF4L2/MRGX, MRGBP, YEATS4/GAS41, VPS72/YL1 and MEAF6. The NuA4 complex interacts with MYC and the adenovirus E1A protein. RUVBL2 interacts with EP400. Component of a NuA4-related complex which contains EP400, TRRAP/PAF400, SRCAP, BRD8/SMAP, EPC1, DMAP1/DNMAP1, RUVBL1/TIP49, RUVBL2, actin, ACTL6A/BAF53A, VPS72 and YEATS4/GAS41. Interacts with NPAT. Component of the chromatin-remodeling INO80 complex; specifically part of a complex module associated with the helicase ATP-binding and the helicase C-terminal domain of INO80. Component of some MLL1/MLL complex, at least composed of the core components KMT2A/MLL1, ASH2L, HCFC1/HCF1, WDR5 and RBBP5, as well as the facultative components BACC1, CHD8, E2F6, HSP70, INO80C, KANSL1, LAS1L, MAX, MCRS1, MGA, MYST1/MOF, PELP1, PHF20, PRP31, RING2, RUVB1/TIP49A, RUVB2/TIP49B, SENP3, TAF1, TAF4, TAF6, TAF7, TAF9 and TEX10. Interacts with IGHMBP2. Interacts with TELO2. Interacts with HINT1. Component of a SWR1-like complex. Component of the R2TP complex composed at least of RUVBL1, RUVBL2, RPAP3 and PIHD1. Component of the PAQosome complex which is responsible for the biogenesis of several protein complexes and which consists of R2TP complex members RUVBL1, RUVBL2, RPAP3 and PIH1D1, URI complex members PFDN2, PFDN6, PDRG1, UXT and URI1 as well as ASDURF, POLR2E and DNAAF10/WDR92. Interacts with ITFG1. Interacts with ZMYND10. Interacts with WAC; WAC positively regulates MTOR activity by promoting the assembly of the TTT complex composed of TELO2, TTI1 and TTI2 and the RUVBL complex composed of RUVBL1 and RUVBL2 into the TTT-RUVBL complex which leads to the dimerization of the mTORC1 complex and its subsequent activation. Forms a complex with APPL1 and APPL2. Interacts with ZNHIT2 (via HIT-type zinc finger) in the presence of ATP or ADP; shows a stronger interaction in the presence of ADP. The RUVBL1/RUVBL2 complex interacts with ZNHIT1 (via HIT-type zinc finger), ZNHIT3 (via HIT-type zinc finger), ZNHIT6 (via HIT-type zinc finger) and DDX59/ZNHIT5 (via HIT-type zinc finger) in the presence of ADP. Interacts with NOPCHAP1; the interaction is direct and disrupted upon ATP binding. Interacts with SMG1.

The protein resides in the nucleus matrix. It is found in the nucleus. The protein localises to the nucleoplasm. Its subcellular location is the cytoplasm. It localises to the membrane. The protein resides in the dynein axonemal particle. The catalysed reaction is ATP + H2O = ADP + phosphate + H(+). Its function is as follows. Possesses single-stranded DNA-stimulated ATPase and ATP-dependent DNA helicase (5' to 3') activity; hexamerization is thought to be critical for ATP hydrolysis and adjacent subunits in the ring-like structure contribute to the ATPase activity. Component of the NuA4 histone acetyltransferase complex which is involved in transcriptional activation of select genes principally by acetylation of nucleosomal histones H4 and H2A. This modification may both alter nucleosome-DNA interactions and promote interaction of the modified histones with other proteins which positively regulate transcription. This complex may be required for the activation of transcriptional programs associated with oncogene and proto-oncogene mediated growth induction, tumor suppressor mediated growth arrest and replicative senescence, apoptosis, and DNA repair. The NuA4 complex ATPase and helicase activities seem to be, at least in part, contributed by the association of RUVBL1 and RUVBL2 with EP400. NuA4 may also play a direct role in DNA repair when recruited to sites of DNA damage. Component of a SWR1-like complex that specifically mediates the removal of histone H2A.Z/H2AZ1 from the nucleosome. Proposed core component of the chromatin remodeling INO80 complex which exhibits DNA- and nucleosome-activated ATPase activity and catalyzes ATP-dependent nucleosome sliding. Plays an essential role in oncogenic transformation by MYC and also modulates transcriptional activation by the LEF1/TCF1-CTNNB1 complex. May also inhibit the transcriptional activity of ATF2. Involved in the endoplasmic reticulum (ER)-associated degradation (ERAD) pathway where it negatively regulates expression of ER stress response genes. May play a role in regulating the composition of the U5 snRNP complex. The sequence is that of RuvB-like 2 (Ruvbl2) from Mus musculus (Mouse).